A 330-amino-acid polypeptide reads, in one-letter code: Protein TIFY 11f (330 aa).

The 37-residue stretch at 61-97 (EAAAAAQLKIMYGGRMLVFDDFFPAGGAVVELVRAAA) folds into the Tify 1 domain. The short motif at 124–142 (PVVRKVSLQRFVEKRRRMR) is the Jas element. The short motif at 126-133 (VRKVSLQR) is the Nuclear localization signal element. The 37-residue stretch at 228–264 (EAAAAAQLKIMYGGRMLVFDDFFPAGGAVVELVRAAA) folds into the Tify 2 domain. Residues 267 to 330 (GRDDDGARAR…SGRTDDAAFY (64 aa)) are disordered.

The protein belongs to the TIFY/JAZ family. Ubiquitinated. Targeted for degradation by the SCF(COI1) E3 ubiquitin ligase-proteasome pathway during jasmonate signaling.

It is found in the nucleus. Repressor of jasmonate responses. This is Protein TIFY 11f from Oryza sativa subsp. japonica (Rice).